A 414-amino-acid chain; its full sequence is Putative L-lactate dehydrogenase (414 aa).

Residues 29-406 (RRLGAALTIQ…SPRHVTQLRR (378 aa)) form the FMN hydroxy acid dehydrogenase domain. A 2-oxocarboxylate is bound at residue tyrosine 55. Serine 137 and glutamine 159 together coordinate FMN. Tyrosine 161 lines the a 2-oxocarboxylate pocket. Threonine 187 lines the FMN pocket. Arginine 196 is an a 2-oxocarboxylate binding site. Lysine 277 serves as a coordination point for FMN. Histidine 301 functions as the Proton acceptor in the catalytic mechanism. Arginine 304 serves as a coordination point for a 2-oxocarboxylate. Residues 332-336 (DTGIM) and 355-356 (GR) contribute to the FMN site.

Belongs to the FMN-dependent alpha-hydroxy acid dehydrogenase family. It depends on FMN as a cofactor.

The catalysed reaction is (S)-lactate + A = pyruvate + AH2. In Mycobacterium tuberculosis (strain ATCC 25618 / H37Rv), this protein is Putative L-lactate dehydrogenase (lldD).